The sequence spans 413 residues: Monacolin J acid methylbutanoyltransferase (413 aa).

Residue arginine 73 coordinates monacolin J. Residue serine 76 is the Acyl-ester intermediate of the active site. 3 residues coordinate monacolin J: arginine 173, tyrosine 188, and tyrosine 258. Glycine 366 is a binding site for 2-methylbutanoate. 2 residues coordinate monacolin J: glutamate 388 and tryptophan 390.

The protein belongs to the class-A beta-lactamase family. Interacts with LovF.

It catalyses the reaction monacolin J carboxylate + (S)-2-methylbutanoyl-[2-methylbutanoate polyketide synthase] = lovastatin carboxylate + holo-[2-methylbutanoate polyketide synthase]. The protein operates within polyketide biosynthesis; lovastatin biosynthesis. In terms of biological role, monacolin J acid methylbutanoyltransferase; part of the gene cluster that mediates the biosynthesis of lovastatin (also known as mevinolin, mevacor or monacolin K), a hypolipidemic inhibitor of (3S)-hydroxymethylglutaryl-coenzyme A (HMG-CoA) reductase (HMGR). The first step in the biosynthesis of lovastatin is the production of dihydromonacolin L acid by the lovastatin nonaketide synthase lovB and the trans-acting enoyl reductase lovC via condensation of one acetyl-CoA unit and 8 malonyl-CoA units. Dihydromonacolin L acid is released from lovB by the thioesterase lovG. Next, dihydromonacolin L acid is oxidized by the dihydromonacolin L monooxygenase lovA twice to form monacolin J acid. The 2-methylbutyrate moiety of lovastatin is synthesized by the lovastatin diketide synthase lovF via condensation of one acetyl-CoA unit and one malonyl-CoA unit. Finally, the covalent attachment of this moiety to monacolin J acid is catalyzed by the transesterase lovD to yield lovastatin. LovD has broad substrate specificity and can also convert monacolin J to simvastatin using alpha-dimethylbutanoyl-S-methyl-3-mercaptopropionate (DMB-S-MMP) as the thioester acyl donor, and can also catalyze the reverse reaction and function as hydrolase in vitro. LovD has much higher activity with LovF-bound 2-methylbutanoate than with free diketide substrates. In Aspergillus terreus (strain NIH 2624 / FGSC A1156), this protein is Monacolin J acid methylbutanoyltransferase.